The following is a 301-amino-acid chain: Acetyl-coenzyme A carboxylase carboxyl transferase subunit beta (301 aa).

The CoA carboxyltransferase N-terminal domain occupies 29–298 (LWVKCPETGQ…AEPAEEEAEP (270 aa)).

It belongs to the AccD/PCCB family. As to quaternary structure, acetyl-CoA carboxylase is a heterohexamer composed of biotin carboxyl carrier protein (AccB), biotin carboxylase (AccC) and two subunits each of ACCase subunit alpha (AccA) and ACCase subunit beta (AccD).

It localises to the cytoplasm. It catalyses the reaction N(6)-carboxybiotinyl-L-lysyl-[protein] + acetyl-CoA = N(6)-biotinyl-L-lysyl-[protein] + malonyl-CoA. It functions in the pathway lipid metabolism; malonyl-CoA biosynthesis; malonyl-CoA from acetyl-CoA: step 1/1. Component of the acetyl coenzyme A carboxylase (ACC) complex. Biotin carboxylase (BC) catalyzes the carboxylation of biotin on its carrier protein (BCCP) and then the CO(2) group is transferred by the transcarboxylase to acetyl-CoA to form malonyl-CoA. The chain is Acetyl-coenzyme A carboxylase carboxyl transferase subunit beta from Methylobacterium nodulans (strain LMG 21967 / CNCM I-2342 / ORS 2060).